We begin with the raw amino-acid sequence, 312 residues long: 26S proteasome non-ATPase regulatory subunit 14 (312 aa).

The region spanning 33 to 168 (VYISSLALLK…IDAFRTINPQ (136 aa)) is the MPN domain. 3 residues coordinate Zn(2+): His-115, His-117, and Asp-128. Positions 115 to 128 (HSHPGFGCWLSGVD) match the JAMM motif motif.

The protein belongs to the peptidase M67A family. PSMD14 subfamily. In terms of assembly, component of the 19S regulatory cap of the 26S proteasome.

In terms of biological role, metalloprotease component of the 26S proteasome that specifically cleaves 'Lys-63'-linked polyubiquitin chains. The 26S proteasome is involved in the ATP-dependent degradation of ubiquitinated proteins. The function of the 'Lys-63'-specific deubiquitination of the proteasome is unclear. The protein is 26S proteasome non-ATPase regulatory subunit 14 (rpn-11) of Caenorhabditis elegans.